The following is a 177-amino-acid chain: Large ribosomal subunit protein uL10 (177 aa).

It belongs to the universal ribosomal protein uL10 family. Part of the ribosomal stalk of the 50S ribosomal subunit. The N-terminus interacts with L11 and the large rRNA to form the base of the stalk. The C-terminus forms an elongated spine to which L12 dimers bind in a sequential fashion forming a multimeric L10(L12)X complex.

Its function is as follows. Forms part of the ribosomal stalk, playing a central role in the interaction of the ribosome with GTP-bound translation factors. The protein is Large ribosomal subunit protein uL10 of Kocuria rhizophila (strain ATCC 9341 / DSM 348 / NBRC 103217 / DC2201).